Reading from the N-terminus, the 506-residue chain is Exoglucanase (506 aa).

The signal sequence occupies residues 1–18 (MFPRSILLALSLTAVALG). The segment at 19–450 (QQVGTNMAEN…IKFGDINSTF (432 aa)) is catalytic. The active-site Nucleophile is the Glu227. Catalysis depends on Glu232, which acts as the Proton donor. Asn308 is a glycosylation site (N-linked (GlcNAc...) asparagine). Positions 405–426 (ASPSQPGISRGTCSRDSGKPED) are disordered. Positions 406-419 (SPSQPGISRGTCSR) are enriched in polar residues. N-linked (GlcNAc...) asparagine glycosylation is present at Asn447. The tract at residues 449-472 (TFNNNGGGGGNPSPTTTRPNSPAQ) is disordered. The interval 451–473 (NNNGGGGGNPSPTTTRPNSPAQT) is linker. Residues 460 to 470 (PSPTTTRPNSP) are compositionally biased toward low complexity. A CBM1 domain is found at 470–506 (PAQTMWGQCGGQGWTGPTACQSPSTCHVINDFYSQCF). Intrachain disulfides connect Cys478-Cys495 and Cys489-Cys505.

Belongs to the glycosyl hydrolase 7 (cellulase C) family.

It catalyses the reaction Hydrolysis of (1-&gt;4)-beta-D-glucosidic linkages in cellulose and cellotetraose, releasing cellobiose from the non-reducing ends of the chains.. Functionally, the biological conversion of cellulose to glucose generally requires three types of hydrolytic enzymes: (1) Endoglucanases which cut internal beta-1,4-glucosidic bonds; (2) Exocellobiohydrolases that cut the disaccharide cellobiose from the non-reducing end of the cellulose polymer chain; (3) Beta-1,4-glucosidases which hydrolyze the cellobiose and other short cello-oligosaccharides to glucose. The polypeptide is Exoglucanase (cel2) (Agaricus bisporus (White button mushroom)).